The following is a 211-amino-acid chain: NADH-quinone oxidoreductase subunit I (211 aa).

2 consecutive 4Fe-4S ferredoxin-type domains span residues 90 to 119 (RLWESDTERCIGCGLCEKICISNCIRIDTK) and 129 to 158 (TEYSINLGRCIFCGYCAEVCPELAITHGGE). [4Fe-4S] cluster contacts are provided by Cys99, Cys102, Cys105, Cys109, Cys138, Cys141, Cys144, and Cys148.

This sequence belongs to the complex I 23 kDa subunit family. As to quaternary structure, NDH-1 is composed of 14 different subunits. Subunits NuoA, H, J, K, L, M, N constitute the membrane sector of the complex. The cofactor is [4Fe-4S] cluster.

Its subcellular location is the cell inner membrane. It catalyses the reaction a quinone + NADH + 5 H(+)(in) = a quinol + NAD(+) + 4 H(+)(out). Its function is as follows. NDH-1 shuttles electrons from NADH, via FMN and iron-sulfur (Fe-S) centers, to quinones in the respiratory chain. The immediate electron acceptor for the enzyme in this species is believed to be ubiquinone. Couples the redox reaction to proton translocation (for every two electrons transferred, four hydrogen ions are translocated across the cytoplasmic membrane), and thus conserves the redox energy in a proton gradient. This is NADH-quinone oxidoreductase subunit I from Sulfurimonas denitrificans (strain ATCC 33889 / DSM 1251) (Thiomicrospira denitrificans (strain ATCC 33889 / DSM 1251)).